An 877-amino-acid polypeptide reads, in one-letter code: Lipophilic envelope-spanning tunnel protein B (877 aa).

The Cytoplasmic segment spans residues 1–19 (MSQETPASTTEAQIKNKRR). A helical transmembrane segment spans residues 20–40 (ISPFWLLPFIALMIASWLIWD). Residues 41-877 (SYQDRGNTVT…WREWGTALPK (837 aa)) are Periplasmic-facing. MCE/MlaD regions lie at residues 46 to 149 (GNTV…VALD), 160 to 272 (DLMI…GLYE), 279 to 382 (RGVI…VVPG), 391 to 499 (DVLT…PLYA), 515 to 625 (TTVS…ILYA), 634 to 737 (GGQI…LQEA), and 746 to 862 (DGLS…LLQE).

Belongs to the PqiB family. Homohexamer. May interact with LetA in the inner membrane. May also interact with partners in the outer membrane.

It localises to the cell inner membrane. Forms a tunnel that spans the entire periplasmic space. Is probably involved in the transport of lipids between the inner membrane and the outer membrane through the tunnel. Forms a dynamic tunnel sufficiently long to mediate lipid transport directly between the two membranes without the need for a shuttle protein. Binds phospholipids. Lipids bind inside the tunnel. Required for outer membrane homeostasis. Contributes to membrane integrity. The sequence is that of Lipophilic envelope-spanning tunnel protein B from Escherichia coli (strain K12).